The following is a 431-amino-acid chain: Enolase (431 aa).

(2R)-2-phosphoglycerate is bound at residue Gln-167. Glu-209 functions as the Proton donor in the catalytic mechanism. Mg(2+) contacts are provided by Asp-246, Glu-289, and Asp-316. Positions 341, 370, 371, and 392 each coordinate (2R)-2-phosphoglycerate. Lys-341 (proton acceptor) is an active-site residue.

Belongs to the enolase family. As to quaternary structure, component of the RNA degradosome, a multiprotein complex involved in RNA processing and mRNA degradation. Mg(2+) serves as cofactor.

Its subcellular location is the cytoplasm. It localises to the secreted. It is found in the cell surface. The catalysed reaction is (2R)-2-phosphoglycerate = phosphoenolpyruvate + H2O. It participates in carbohydrate degradation; glycolysis; pyruvate from D-glyceraldehyde 3-phosphate: step 4/5. Catalyzes the reversible conversion of 2-phosphoglycerate (2-PG) into phosphoenolpyruvate (PEP). It is essential for the degradation of carbohydrates via glycolysis. This Marinobacter nauticus (strain ATCC 700491 / DSM 11845 / VT8) (Marinobacter aquaeolei) protein is Enolase.